The following is a 1119-amino-acid chain: Period circadian protein homolog 3 (1119 aa).

A disordered region spans residues methionine 1–asparagine 48. The Nuclear export signal 1 signature appears at leucine 54–lysine 63. PAS domains are found at residues leucine 120–leucine 187 and tyrosine 259–lysine 325. Positions histidine 334–proline 377 constitute a PAC domain. The Nuclear export signal 3 signature appears at leucine 400–leucine 409. Positions glycine 419 to serine 428 are enriched in low complexity. Disordered regions lie at residues glycine 419–alanine 449, valine 483–tyrosine 530, histidine 718–serine 744, and leucine 878–serine 910. Composition is skewed to polar residues over residues glutamine 429 to serine 442 and threonine 491 to threonine 515. A CSNK1E binding domain region spans residues leucine 551–histidine 750. Positions arginine 720–aspartate 739 match the Nuclear localization signal motif. A compositionally biased stretch (basic and acidic residues) spans histidine 885–proline 903. Position 907 is a phosphoserine (serine 907). The Nuclear export signal 2 signature appears at leucine 913 to glutamate 920. A disordered region spans residues glycine 947–serine 1011. Positions serine 970–serine 988 are enriched in low complexity. The segment covering aspartate 989–serine 1001 has biased composition (polar residues). The tract at residues glutamate 1037 to leucine 1119 is CRY binding domain.

As to quaternary structure, homodimer. Component of the circadian core oscillator, which includes the CRY proteins, CLOCK or NPAS2, BMAL1 or BMAL2, CSNK1D and/or CSNK1E, TIMELESS and the PER proteins. Interacts directly with PER1, PER2, CRY1, CRY2, and TIMELESS; interaction with CRY1 and CRY2 is weak and not rhythmic. Interacts with FBXW11 and BTRC. In terms of processing, phosphorylation by CSNK1E is weak and appears to require association with PER1 and translocation to the nucleus. Post-translationally, ubiquitinated.

Its subcellular location is the cytoplasm. The protein localises to the nucleus. Its function is as follows. Originally described as a core component of the circadian clock. The circadian clock, an internal time-keeping system, regulates various physiological processes through the generation of approximately 24 hour circadian rhythms in gene expression, which are translated into rhythms in metabolism and behavior. It is derived from the Latin roots 'circa' (about) and 'diem' (day) and acts as an important regulator of a wide array of physiological functions including metabolism, sleep, body temperature, blood pressure, endocrine, immune, cardiovascular, and renal function. Consists of two major components: the central clock, residing in the suprachiasmatic nucleus (SCN) of the brain, and the peripheral clocks that are present in nearly every tissue and organ system. Both the central and peripheral clocks can be reset by environmental cues, also known as Zeitgebers (German for 'timegivers'). The predominant Zeitgeber for the central clock is light, which is sensed by retina and signals directly to the SCN. The central clock entrains the peripheral clocks through neuronal and hormonal signals, body temperature and feeding-related cues, aligning all clocks with the external light/dark cycle. Circadian rhythms allow an organism to achieve temporal homeostasis with its environment at the molecular level by regulating gene expression to create a peak of protein expression once every 24 hours to control when a particular physiological process is most active with respect to the solar day. Transcription and translation of core clock components (CLOCK, NPAS2, BMAL1, BMAL2, PER1, PER2, PER3, CRY1 and CRY2) plays a critical role in rhythm generation, whereas delays imposed by post-translational modifications (PTMs) are important for determining the period (tau) of the rhythms (tau refers to the period of a rhythm and is the length, in time, of one complete cycle). A diurnal rhythm is synchronized with the day/night cycle, while the ultradian and infradian rhythms have a period shorter and longer than 24 hours, respectively. Disruptions in the circadian rhythms contribute to the pathology of cardiovascular diseases, cancer, metabolic syndromes and aging. A transcription/translation feedback loop (TTFL) forms the core of the molecular circadian clock mechanism. Transcription factors, CLOCK or NPAS2 and BMAL1 or BMAL2, form the positive limb of the feedback loop, act in the form of a heterodimer and activate the transcription of core clock genes and clock-controlled genes (involved in key metabolic processes), harboring E-box elements (5'-CACGTG-3') within their promoters. The core clock genes: PER1/2/3 and CRY1/2 which are transcriptional repressors form the negative limb of the feedback loop and interact with the CLOCK|NPAS2-BMAL1|BMAL2 heterodimer inhibiting its activity and thereby negatively regulating their own expression. This heterodimer also activates nuclear receptors NR1D1, NR1D2, RORA, RORB and RORG, which form a second feedback loop and which activate and repress BMAL1 transcription, respectively. Has a redundant role with the other PER proteins PER1 and PER2 and is not essential for the circadian rhythms maintenance. In contrast, plays an important role in sleep-wake timing and sleep homeostasis probably through the transcriptional regulation of sleep homeostasis-related genes, without influencing circadian parameters. Can bind heme. This is Period circadian protein homolog 3 (Per3) from Rattus norvegicus (Rat).